The following is a 425-amino-acid chain: bZIP transcription factor RISBZ2 (425 aa).

Disordered regions lie at residues 1-50 and 169-257; these read MERV…GGGG and NSIG…AAHL. Residues 30–50 are compositionally biased toward gly residues; the sequence is QGGGGVASGGGGGVAGGGGGG. The span at 171 to 182 shows a compositional bias: polar residues; it reads IGGNATPVQNML. The segment covering 213 to 222 has biased composition (acidic residues); sequence SDDDDMEGEA. The span at 231-247 shows a compositional bias: basic and acidic residues; sequence ADQRLQRRKQSNRESAR. A bZIP domain is found at 232–295; sequence DQRLQRRKQS…NDAAVDNRVL (64 aa). The basic motif stretch occupies residues 234–253; sequence RLQRRKQSNRESARRSRSRK. The segment at 260-274 is leucine-zipper; sequence LEAQVSQLRVENSSL. The tract at residues 334 to 354 is disordered; it reads MPFNSSPSEATSDAAVPIQDD.

Heterodimer with RISBZ1/BZIP58.

It is found in the nucleus. Its function is as follows. Transcriptional activator that binds to the DNA specific sequence 5'-GCCACGT[AC]AG-3' found in the alpha-globulin gene promoter. Does not bind to promoters of other major storage genes such as glutelin, prolamin and albumin. Binds to the DNA specific sequence 5'-TGAGTCA-3' found in seed storage protein gene promoters. This is bZIP transcription factor RISBZ2 from Oryza sativa subsp. japonica (Rice).